A 153-amino-acid polypeptide reads, in one-letter code: Ribosome maturation factor RimP (153 aa).

The protein belongs to the RimP family.

Its subcellular location is the cytoplasm. Its function is as follows. Required for maturation of 30S ribosomal subunits. The protein is Ribosome maturation factor RimP of Coxiella burnetii (strain CbuK_Q154) (Coxiella burnetii (strain Q154)).